We begin with the raw amino-acid sequence, 256 residues long: Pimeloyl-[acyl-carrier protein] methyl ester esterase (256 aa).

The 228-residue stretch at 15-242 folds into the AB hydrolase-1 domain; that stretch reads HLVLLHGWGL…AAHAPFISHP (228 aa). Substrate-binding positions include Trp22, 82 to 83, and 143 to 147; these read SL and FLALQ. The Nucleophile role is filled by Ser82. Residues Asp207 and His235 contribute to the active site. His235 contacts substrate.

The protein belongs to the AB hydrolase superfamily. Carboxylesterase BioH family. In terms of assembly, monomer.

It is found in the cytoplasm. The enzyme catalyses 6-carboxyhexanoyl-[ACP] methyl ester + H2O = 6-carboxyhexanoyl-[ACP] + methanol + H(+). The protein operates within cofactor biosynthesis; biotin biosynthesis. Functionally, the physiological role of BioH is to remove the methyl group introduced by BioC when the pimeloyl moiety is complete. It allows to synthesize pimeloyl-ACP via the fatty acid synthetic pathway through the hydrolysis of the ester bonds of pimeloyl-ACP esters. This Shigella boydii serotype 4 (strain Sb227) protein is Pimeloyl-[acyl-carrier protein] methyl ester esterase.